The primary structure comprises 315 residues: Tyrosine recombinase XerC (315 aa).

One can recognise a Core-binding (CB) domain in the interval 13–104 (ADLAAAREEW…GVRSLLRHLE (92 aa)). A Tyr recombinase domain is found at 125-309 (SLPKPLTADD…DTQRLLEVYD (185 aa)). Residues R168, K193, H261, R264, and H287 contribute to the active site. Y296 functions as the O-(3'-phospho-DNA)-tyrosine intermediate in the catalytic mechanism.

This sequence belongs to the 'phage' integrase family. XerC subfamily. In terms of assembly, forms a cyclic heterotetrameric complex composed of two molecules of XerC and two molecules of XerD.

The protein resides in the cytoplasm. Functionally, site-specific tyrosine recombinase, which acts by catalyzing the cutting and rejoining of the recombining DNA molecules. The XerC-XerD complex is essential to convert dimers of the bacterial chromosome into monomers to permit their segregation at cell division. It also contributes to the segregational stability of plasmids. This is Tyrosine recombinase XerC from Brucella suis biovar 1 (strain 1330).